A 158-amino-acid polypeptide reads, in one-letter code: Snaclec flavocetin-A subunit alpha (158 aa).

Residues 1-23 form the signal peptide; it reads MERLIFVSFGLLVVILSLSGTGA. Intrachain disulfides connect C27/C38, C55/C152, and C127/C144. The C-type lectin domain occupies 34–153; it reads YDRYCYQAFS…CGTENPFVCK (120 aa).

This sequence belongs to the snaclec family. Tetramer of heterodimers of alpha and beta subunits (alphabeta)(4); disulfide-linked. In terms of tissue distribution, expressed by the venom gland.

Its subcellular location is the secreted. Functionally, strong platelet aggregation inhibitor. Binds specifically to platelet glycoprotein Ibalpha (GP1BA) with high affinity and inhibits vWF-dependent platelet aggregation. Has also been observed to induce small agglutinates in washed platelets by binding to GPIb. This Protobothrops flavoviridis (Habu) protein is Snaclec flavocetin-A subunit alpha.